Consider the following 266-residue polypeptide: Protein phosphatase 1 regulatory subunit 35 (266 aa).

The segment covering methionine 1–glutamate 10 has biased composition (polar residues). The disordered stretch occupies residues methionine 1–serine 118. A compositionally biased stretch (pro residues) spans proline 21–glutamate 38. Phosphoserine is present on residues serine 46 and serine 51. A compositionally biased stretch (basic residues) spans glycine 62 to glutamine 79. Pro residues predominate over residues proline 86 to alanine 97.

The protein belongs to the PPP1R35 family. In terms of assembly, interacts with PPP1CA; this interaction mediates the PPP1CA phosphatase activity inhibition. Interacts with RTTN; this interaction allows the mutual recruitment to the centriole.

It localises to the cytoplasm. It is found in the cytoskeleton. The protein resides in the microtubule organizing center. The protein localises to the centrosome. Its subcellular location is the centriole. In terms of biological role, during centriole duplication, plays a role in the centriole elongation by promoting the recruitment of the microtubule-binding elongation machinery through its interaction with RTTN, leading to the centriole to centrosome conversion. In addition may play a role in the primary cilia assembly. The protein is Protein phosphatase 1 regulatory subunit 35 of Bos taurus (Bovine).